The following is a 585-amino-acid chain: Arginine--tRNA ligase (585 aa).

The short motif at 131-141 (ANPTGPMHVGH) is the 'HIGH' region element.

It belongs to the class-I aminoacyl-tRNA synthetase family. As to quaternary structure, monomer.

Its subcellular location is the cytoplasm. The catalysed reaction is tRNA(Arg) + L-arginine + ATP = L-arginyl-tRNA(Arg) + AMP + diphosphate. The protein is Arginine--tRNA ligase of Bartonella bacilliformis (strain ATCC 35685 / KC583 / Herrer 020/F12,63).